We begin with the raw amino-acid sequence, 255 residues long: 20 kDa chaperonin, chloroplastic (255 aa).

The transit peptide at 1–53 directs the protein to the chloroplast; sequence MAATHLTSTSSLTINTLPSFEGLRSASGISKINVSVAYPSFTSRSFRGLVVRA. 2 cpn-10 domain regions span residues 54-156 and 157-255; these read ASIT…ILET and DDVK…AVLS.

The protein belongs to the GroES chaperonin family. As to quaternary structure, forms stable complexes with CPN60 in the presence of ATP.

It localises to the plastid. It is found in the chloroplast. Functionally, seems to function only as a co-chaperone, along with cpn60, and in certain cases is essential for the discharge of biologically active proteins from cpn60. The protein is 20 kDa chaperonin, chloroplastic (CPN21) of Spinacia oleracea (Spinach).